The sequence spans 102 residues: Small ribosomal subunit protein uS10 (102 aa).

It belongs to the universal ribosomal protein uS10 family. Part of the 30S ribosomal subunit.

Its function is as follows. Involved in the binding of tRNA to the ribosomes. The chain is Small ribosomal subunit protein uS10 from Acidithiobacillus ferrooxidans (strain ATCC 53993 / BNL-5-31) (Leptospirillum ferrooxidans (ATCC 53993)).